A 119-amino-acid polypeptide reads, in one-letter code: Dihydroneopterin aldolase (119 aa).

Substrate contacts are provided by residues Glu-21, Tyr-53, and 72-73; that span reads VE. Lys-98 functions as the Proton donor/acceptor in the catalytic mechanism.

Belongs to the DHNA family.

The catalysed reaction is 7,8-dihydroneopterin = 6-hydroxymethyl-7,8-dihydropterin + glycolaldehyde. Its pathway is cofactor biosynthesis; tetrahydrofolate biosynthesis; 2-amino-4-hydroxy-6-hydroxymethyl-7,8-dihydropteridine diphosphate from 7,8-dihydroneopterin triphosphate: step 3/4. Catalyzes the conversion of 7,8-dihydroneopterin to 6-hydroxymethyl-7,8-dihydropterin. This Streptomyces coelicolor (strain ATCC BAA-471 / A3(2) / M145) protein is Dihydroneopterin aldolase (folB).